The primary structure comprises 130 residues: Small ribosomal subunit protein uS9 (130 aa).

Belongs to the universal ribosomal protein uS9 family.

The sequence is that of Small ribosomal subunit protein uS9 from Streptococcus pyogenes serotype M1.